Reading from the N-terminus, the 503-residue chain is MDLIPNLAVETWLLLAVSLILLYLYGTRTHGLFKKLGIPGPTPLPFLGNALSFRKGYWTFDMECYKKYRKVWGIYDCQQPMLAITDPDMIKTVLVKECYSVFTNRRPFGPVGFMKNAISIAEDEEWKRIRSLLSPTFTSGKLKEMVPIIAQYGDVLVRNLRREAETGKPVTLKHVFGAYSMDVITSTSFGVSIDSLNNPQDPFVENTKKLLRFNPLDPFVLSIKVFPFLTPILEALNITVFPRKVISFLTKSVKQIKEGRLKETQKHRVDFLQLMIDSQNSKDSETHKALSDLELMAQSIIFIFAGYETTSSVLSFIIYELATHPDVQQKVQKEIDTVLPNKAPPTYDTVLQLEYLDMVVNETLRLFPVAMRLERVCKKDVEINGMFIPKGVVVMIPSYVLHHDPKYWTEPEKFLPERFSKKNKDNIDPYIYTPFGSGPRNCIGMRFALVNMKLALVRVLQNFSFKPCKETQIPLKLRFGGLLLTEKPIVLKAESRDETVSGA.

Position 442 (C442) interacts with heme.

It belongs to the cytochrome P450 family. Heme serves as cofactor. In terms of tissue distribution, expressed in fetal liver (at protein level).

The protein resides in the endoplasmic reticulum membrane. Its subcellular location is the microsome membrane. It carries out the reaction an organic molecule + reduced [NADPH--hemoprotein reductase] + O2 = an alcohol + oxidized [NADPH--hemoprotein reductase] + H2O + H(+). It catalyses the reaction 3beta-hydroxyandrost-5-en-17-one + reduced [NADPH--hemoprotein reductase] + O2 = 3beta,16alpha-dihydroxy-androst-5-en-17-one + oxidized [NADPH--hemoprotein reductase] + H2O + H(+). The catalysed reaction is dehydroepiandrosterone 3-sulfate + reduced [NADPH--hemoprotein reductase] + O2 = 16alpha-hydroxydehydroepiandrosterone 3-sulfate + oxidized [NADPH--hemoprotein reductase] + H2O + H(+). The enzyme catalyses testosterone + reduced [NADPH--hemoprotein reductase] + O2 = 6beta,17beta-dihydroxyandrost-4-en-3-one + oxidized [NADPH--hemoprotein reductase] + H2O + H(+). It carries out the reaction estrone + reduced [NADPH--hemoprotein reductase] + O2 = 2-hydroxyestrone + oxidized [NADPH--hemoprotein reductase] + H2O + H(+). It catalyses the reaction estrone + reduced [NADPH--hemoprotein reductase] + O2 = 4-hydroxyestrone + oxidized [NADPH--hemoprotein reductase] + H2O + H(+). The catalysed reaction is estrone + reduced [NADPH--hemoprotein reductase] + O2 = 16alpha-hydroxyestrone + oxidized [NADPH--hemoprotein reductase] + H2O + H(+). The enzyme catalyses 17beta-estradiol + reduced [NADPH--hemoprotein reductase] + O2 = 2-hydroxy-17beta-estradiol + oxidized [NADPH--hemoprotein reductase] + H2O + H(+). It carries out the reaction 17beta-estradiol + reduced [NADPH--hemoprotein reductase] + O2 = 6beta-hydroxyestradiol-17beta + oxidized [NADPH--hemoprotein reductase] + H2O + H(+). It catalyses the reaction all-trans-retinoate + reduced [NADPH--hemoprotein reductase] + O2 = all-trans-4-hydroxyretinoate + oxidized [NADPH--hemoprotein reductase] + H2O + H(+). The catalysed reaction is all-trans-retinoate + reduced [NADPH--hemoprotein reductase] + O2 = all-trans-18-hydroxyretinoate + oxidized [NADPH--hemoprotein reductase] + H2O + H(+). It participates in steroid hormone biosynthesis. The protein operates within cofactor metabolism; retinol metabolism. Its function is as follows. A cytochrome P450 monooxygenase involved in the metabolism of steroid hormones and vitamins during embryogenesis. Mechanistically, uses molecular oxygen inserting one oxygen atom into a substrate, and reducing the second into a water molecule, with two electrons provided by NADPH via cytochrome P450 reductase (NADPH--hemoprotein reductase). Catalyzes the hydroxylation of carbon-hydrogen bonds. Metabolizes 3beta-hydroxyandrost-5-en-17-one (dehydroepiandrosterone, DHEA), a precursor in the biosynthesis of androgen and estrogen steroid hormones. Exhibits high catalytic activity for the formation of hydroxyestrogens from estrone (E1), particularly D-ring hydroxylated estrone at the C16-alpha position. Mainly hydroxylates all trans-retinoic acid (atRA) to 4-hydroxyretinoate and may play a role in atRA clearance during fetal development. Also involved in the oxidative metabolism of xenobiotics including anticonvulsants. The sequence is that of Cytochrome P450 3A7 from Homo sapiens (Human).